The following is a 372-amino-acid chain: Zinc finger protein dpff-1 (372 aa).

Positions 108 to 204 (VGPTTESVSD…SRSIVKETKY (97 aa)) are disordered. Residues 109–131 (GPTTESVSDSSNDSTTIRPSRQT) show a composition bias toward polar residues. Residues 132 to 141 (QIKEEYRDDY) show a composition bias toward basic and acidic residues. Positions 142 to 158 (VLDDELSPDEFGSDEDD) are enriched in acidic residues. The segment covering 184–196 (TTRSSVSRLTPSR) has biased composition (polar residues). A C2H2-type zinc finger spans residues 212 to 235 (YPCDKCSAKYKSLAGLSYHQSYLH). 2 consecutive PHD-type zinc fingers follow at residues 256 to 314 (SCDF…CKSC) and 316 to 361 (ICGT…CQVE).

This sequence belongs to the requiem/DPF family.

It is found in the nucleus. Its subcellular location is the cytoplasm. Functionally, probable transcription factor, involved in meiosis and stress protection. In Caenorhabditis elegans, this protein is Zinc finger protein dpff-1.